We begin with the raw amino-acid sequence, 189 residues long: GTPase NRas (189 aa).

GTP-binding positions include 10–18 (GAGGVGKSA) and 29–30 (VD). Positions 32-40 (YDPTIEDSY) match the Effector region motif. Residue Thr-35 is glycosylated ((Microbial infection) O-linked (Glc) threonine; by P.sordellii toxin TcsL). 57–61 (DTAGQ) lines the GTP pocket. Ser-89 carries the phosphoserine modification. 116 to 119 (NKCD) lines the GTP pocket. Residues 166–185 (YRMKKLNSSDDGTQGCMGLP) are hypervariable region. Lys-170 participates in a covalent cross-link: Glycyl lysine isopeptide (Lys-Gly) (interchain with G-Cter in ubiquitin). Cys-181 carries S-palmitoyl cysteine lipidation. Cys-186 carries the S-farnesyl cysteine lipid modification. Residues 187 to 189 (VVM) constitute a propeptide, removed in mature form.

The protein belongs to the small GTPase superfamily. Ras family. Interacts (active GTP-bound form preferentially) with RGS14. Interacts (active GTP-bound form) with RASSF7. Interacts (active GTP-bound form) with both SHOC2 and PP1c (all isoforms) to form a tertiary complex; SHOC2 and PP1c preferably bind M-Ras/MRAS, but they also bind K-Ras/KRAS, N-Ras/NRAS and H-Ras/HRAS. Palmitoylated by the ZDHHC9-GOLGA7 complex. Depalmitoylated by ABHD17A, ABHD17B and ABHD17C. A continuous cycle of de- and re-palmitoylation regulates rapid exchange between plasma membrane and Golgi. In terms of processing, acetylation at Lys-104 prevents interaction with guanine nucleotide exchange factors (GEFs). Post-translationally, fatty-acylated at Lys-169 and/or Lys-170. Ubiquitinated by the BCR(LZTR1) E3 ubiquitin ligase complex at Lys-170 in a non-degradative manner, leading to inhibit Ras signaling by decreasing Ras association with membranes. In terms of processing, phosphorylation at Ser-89 enhances NRAS association with its downstream effectors. Post-translationally, (Microbial infection) Glucosylated at Thr-35 by P.sordellii toxin TcsL.

The protein resides in the cell membrane. The protein localises to the golgi apparatus membrane. The catalysed reaction is GTP + H2O = GDP + phosphate + H(+). With respect to regulation, alternates between an inactive form bound to GDP and an active form bound to GTP. Activated by a guanine nucleotide-exchange factor (GEF) and inactivated by a GTPase-activating protein (GAP). Ras proteins bind GDP/GTP and possess intrinsic GTPase activity. This chain is GTPase NRas (NRAS), found in Homo sapiens (Human).